The primary structure comprises 174 residues: Eukaryotic translation elongation factor 1 epsilon-1 (174 aa).

Alanine 2 carries the post-translational modification N-acetylalanine. An N-terminal region spans residues 2-56; sequence AAAAELKLLEKSLGLRPGNKYSAQGERQIPVLQTNNGPSLTGLATIATHLVKQAS. Residues 50-173 enclose the GST C-terminal domain; that stretch reads HLVKQASKEH…FIKNRLYANS (124 aa). Positions 57–63 are linker; that stretch reads KEHLLGS. The C-terminal stretch occupies residues 64 to 152; sequence TAEEKALVQQ…SRWFCHIQHY (89 aa). The residue at position 138 (lysine 138) is an N6-acetyllysine. A coiled-coil region spans residues 153 to 169; it reads PDIRQHLSSVVFIKNRL.

In terms of assembly, part of a multisubunit complex that groups tRNA ligases for Arg (RARS1), Asp (DARS1), Gln (QARS1), Ile (IARS1), Leu (LARS1), Lys (KARS1), Met (MARS1) the bifunctional ligase for Glu and Pro (EPRS1) and the auxiliary subunits AIMP1/p43, AIMP2/p38 and EEF1E1/p18. Can interact simultaneously with MARS1 and EPRS1. Forms a linear complex that contains MARS1, EEF1E1, EPRS1 and AIMP2 that is at the core of the multisubunit complex. Interacts with ATM and ATR. The interaction with ATM, which takes place independently of TP53, is induced by DNA damage that may occur during genotoxic stress or cell growth. The interaction with ATR is enhanced by UV irradiation.

It is found in the cytoplasm. It localises to the nucleus. Its function is as follows. Positive modulator of ATM response to DNA damage. This chain is Eukaryotic translation elongation factor 1 epsilon-1 (EEF1E1), found in Cricetulus griseus (Chinese hamster).